A 228-amino-acid polypeptide reads, in one-letter code: Ankyrin repeat domain-containing protein 46 (228 aa).

ANK repeat units lie at residues 11–40 (QTSVPLLQACIDGDLSFARRLLETGCDPNI), 44–73 (RGRTGLHLAAARGNVDICRFLHKFGADLLA), 77–103 (QGNTALHLCGHVDTIQFLVSNGLKIDI), and 107–138 (NGSTPLVLAKRRGVNKDAIRLLEGLEEQEVKG). A helical membrane pass occupies residues 195–215 (VLLLLVVIALLSLGIAYYVSG).

The protein localises to the membrane. The polypeptide is Ankyrin repeat domain-containing protein 46 (ankrd46) (Danio rerio (Zebrafish)).